A 672-amino-acid chain; its full sequence is Iron-phytosiderophore transporter YSL15 (672 aa).

Positions 1–11 (MEHADADRTRV) are enriched in basic and acidic residues. Residues 1-27 (MEHADADRTRVAPEIGSLHDEDAEADP) are disordered. The next 14 helical transmembrane spans lie at 47–67 (GVVA…KIAL), 70–90 (GLVP…LRGW), 115–135 (CAVA…LLGL), 158–178 (GIGW…LSLI), 218–238 (LHGF…QWFY), 279–299 (LVNL…WPLI), 325–345 (FLCI…VTGV), 390–410 (MAYS…PIMF), 418–438 (VIIA…GAGL), 450–470 (IALF…AGLV), 504–524 (VGEL…FMLF), 556–576 (ISAL…FAVL), 602–622 (FLVG…LFAW), and 630–650 (AAFM…IWTF).

Belongs to the YSL (TC 2.A.67.2) family. As to expression, expressed in root phloem and at low levels in the shoot companion cells.

It localises to the cell membrane. Functionally, involved in Fe(3+) uptake from the rhizosphere and phloem transport of iron. Plays an important role in iron homeostasis during the early stages of growth. Transports Fe(3+)-phytosiderophore, but not Fe(3+)- or Fe(2+)-nicotianamine. May not transport other chelated metals. This is Iron-phytosiderophore transporter YSL15 (YSL15) from Oryza sativa subsp. japonica (Rice).